The following is a 74-amino-acid chain: Small ribosomal subunit protein bS18 (74 aa).

This sequence belongs to the bacterial ribosomal protein bS18 family. As to quaternary structure, part of the 30S ribosomal subunit. Forms a tight heterodimer with protein bS6.

Its function is as follows. Binds as a heterodimer with protein bS6 to the central domain of the 16S rRNA, where it helps stabilize the platform of the 30S subunit. The chain is Small ribosomal subunit protein bS18 from Thioalkalivibrio sulfidiphilus (strain HL-EbGR7).